We begin with the raw amino-acid sequence, 382 residues long: 1-deoxy-D-xylulose 5-phosphate reductoisomerase (382 aa).

NADPH is bound by residues T10, G11, S12, I13, G36, and N122. K123 lines the 1-deoxy-D-xylulose 5-phosphate pocket. E124 contacts NADPH. D148 is a binding site for Mn(2+). Residues S149, E150, S174, and H197 each coordinate 1-deoxy-D-xylulose 5-phosphate. E150 lines the Mn(2+) pocket. G203 is a binding site for NADPH. 1-deoxy-D-xylulose 5-phosphate is bound by residues S210, N215, K216, and E219. E219 is a Mn(2+) binding site.

This sequence belongs to the DXR family. The cofactor is Mg(2+). Mn(2+) is required as a cofactor.

The enzyme catalyses 2-C-methyl-D-erythritol 4-phosphate + NADP(+) = 1-deoxy-D-xylulose 5-phosphate + NADPH + H(+). It functions in the pathway isoprenoid biosynthesis; isopentenyl diphosphate biosynthesis via DXP pathway; isopentenyl diphosphate from 1-deoxy-D-xylulose 5-phosphate: step 1/6. Functionally, catalyzes the NADPH-dependent rearrangement and reduction of 1-deoxy-D-xylulose-5-phosphate (DXP) to 2-C-methyl-D-erythritol 4-phosphate (MEP). The sequence is that of 1-deoxy-D-xylulose 5-phosphate reductoisomerase from Prosthecochloris aestuarii (strain DSM 271 / SK 413).